The sequence spans 304 residues: Probable WRKY transcription factor 29 (304 aa).

Disordered stretches follow at residues 76–96 (LPED…GCLL) and 185–236 (YTNE…IPSA). The span at 78 to 88 (EDSKPFRDDKK) shows a compositional bias: basic and acidic residues. The WRKY DNA-binding region spans 128-194 (KEENLLSDAW…YTNEHNHELP (67 aa)). Composition is skewed to polar residues over residues 196-213 (RRNS…QPKP) and 225-236 (SSPTSNPMIPSA).

The protein belongs to the WRKY group II-e family.

It is found in the nucleus. Functionally, transcription factor involved in the expression of defense genes in innate immune response of plants. Interacts specifically with the W box (5'-(T)TGAC[CT]-3'), a frequently occurring elicitor-responsive cis-acting element. Activates WRKY 22, SIRK and its own promoters. The polypeptide is Probable WRKY transcription factor 29 (WRKY29) (Arabidopsis thaliana (Mouse-ear cress)).